We begin with the raw amino-acid sequence, 154 residues long: SsrA-binding protein (154 aa).

This sequence belongs to the SmpB family.

It localises to the cytoplasm. In terms of biological role, required for rescue of stalled ribosomes mediated by trans-translation. Binds to transfer-messenger RNA (tmRNA), required for stable association of tmRNA with ribosomes. tmRNA and SmpB together mimic tRNA shape, replacing the anticodon stem-loop with SmpB. tmRNA is encoded by the ssrA gene; the 2 termini fold to resemble tRNA(Ala) and it encodes a 'tag peptide', a short internal open reading frame. During trans-translation Ala-aminoacylated tmRNA acts like a tRNA, entering the A-site of stalled ribosomes, displacing the stalled mRNA. The ribosome then switches to translate the ORF on the tmRNA; the nascent peptide is terminated with the 'tag peptide' encoded by the tmRNA and targeted for degradation. The ribosome is freed to recommence translation, which seems to be the essential function of trans-translation. The sequence is that of SsrA-binding protein from Lachnoclostridium phytofermentans (strain ATCC 700394 / DSM 18823 / ISDg) (Clostridium phytofermentans).